The primary structure comprises 79 residues: Translational regulator CsrA (79 aa).

Belongs to the CsrA/RsmA family. Homodimer; the beta-strands of each monomer intercalate to form a hydrophobic core, while the alpha-helices form wings that extend away from the core.

Its subcellular location is the cytoplasm. A translational regulator that binds mRNA to regulate translation initiation and/or mRNA stability. Usually binds in the 5'-UTR at or near the Shine-Dalgarno sequence preventing ribosome-binding, thus repressing translation. Its main target seems to be the major flagellin gene, while its function is anatagonized by FliW. In Syntrophus aciditrophicus (strain SB), this protein is Translational regulator CsrA.